A 489-amino-acid chain; its full sequence is Rhamnulokinase (489 aa).

13 to 17 (ASSGR) is a binding site for ATP. Cysteines 68 and 222 form a disulfide. Residues Gly83 and 236–238 (HDT) contribute to the substrate site. Asp237 acts as the Proton acceptor in catalysis. Thr259 contacts ATP. Residue Asn296 participates in substrate binding. ATP is bound at residue Gln304. The cysteines at positions 353 and 370 are disulfide-linked. Position 402 (Gly402) interacts with ATP. Cys413 and Cys417 form a disulfide bridge.

This sequence belongs to the rhamnulokinase family. Monomer. It depends on Mg(2+) as a cofactor.

The catalysed reaction is L-rhamnulose + ATP = L-rhamnulose 1-phosphate + ADP + H(+). It participates in carbohydrate degradation; L-rhamnose degradation; glycerone phosphate from L-rhamnose: step 2/3. In terms of biological role, involved in the catabolism of L-rhamnose (6-deoxy-L-mannose). Catalyzes the transfer of the gamma-phosphate group from ATP to the 1-hydroxyl group of L-rhamnulose to yield L-rhamnulose 1-phosphate. The chain is Rhamnulokinase from Escherichia coli O127:H6 (strain E2348/69 / EPEC).